The primary structure comprises 203 residues: Glycerol-3-phosphate acyltransferase (203 aa).

A run of 5 helical transmembrane segments spans residues 12–32 (ATLLCLAFGYLLGSIPFGLIL), 66–86 (TLLLDALKGTAAAAIASLWGV), 88–108 (AGIAAGLAAFLGHLFPVWLSF), 118–138 (IGVLLGLAPLMVPAFAAIWLA), and 159–179 (IALYATGYGKVALLFALMTVI).

It belongs to the PlsY family. As to quaternary structure, probably interacts with PlsX.

The protein resides in the cell inner membrane. The catalysed reaction is an acyl phosphate + sn-glycerol 3-phosphate = a 1-acyl-sn-glycero-3-phosphate + phosphate. It functions in the pathway lipid metabolism; phospholipid metabolism. In terms of biological role, catalyzes the transfer of an acyl group from acyl-phosphate (acyl-PO(4)) to glycerol-3-phosphate (G3P) to form lysophosphatidic acid (LPA). This enzyme utilizes acyl-phosphate as fatty acyl donor, but not acyl-CoA or acyl-ACP. This chain is Glycerol-3-phosphate acyltransferase, found in Sinorhizobium fredii (strain NBRC 101917 / NGR234).